A 157-amino-acid chain; its full sequence is SsrA-binding protein (157 aa).

The interval 131–157 is disordered; it reads KQLHDKRDTEKKRDWSREKGRIMRARG. Residues 132-151 show a composition bias toward basic and acidic residues; sequence QLHDKRDTEKKRDWSREKGR.

The protein belongs to the SmpB family.

The protein resides in the cytoplasm. Functionally, required for rescue of stalled ribosomes mediated by trans-translation. Binds to transfer-messenger RNA (tmRNA), required for stable association of tmRNA with ribosomes. tmRNA and SmpB together mimic tRNA shape, replacing the anticodon stem-loop with SmpB. tmRNA is encoded by the ssrA gene; the 2 termini fold to resemble tRNA(Ala) and it encodes a 'tag peptide', a short internal open reading frame. During trans-translation Ala-aminoacylated tmRNA acts like a tRNA, entering the A-site of stalled ribosomes, displacing the stalled mRNA. The ribosome then switches to translate the ORF on the tmRNA; the nascent peptide is terminated with the 'tag peptide' encoded by the tmRNA and targeted for degradation. The ribosome is freed to recommence translation, which seems to be the essential function of trans-translation. This is SsrA-binding protein from Rhodopseudomonas palustris (strain BisB18).